The chain runs to 321 residues: Olfactory receptor 3A2 (321 aa).

The Extracellular portion of the chain corresponds to 1 to 35 (MSLQKLMEPEAGTNRTAVAEFILLGLVQTEEMQPV). N-linked (GlcNAc...) asparagine glycosylation is present at N14. A helical membrane pass occupies residues 36 to 58 (VFVLLLFAYLVTTGGNLSILAAV). The Cytoplasmic segment spans residues 59-66 (LVEPKLHA). The chain crosses the membrane as a helical span at residues 67 to 88 (PMYFFLGNLSVLDVGCITVTVP). Topologically, residues 89-109 (AMLGRLLSHKSTISYDACLSQ) are extracellular. A disulfide bridge connects residues C106 and C198. Residues 110–129 (LFFFHLLAGMDCFLLTAMAY) form a helical membrane-spanning segment. Topologically, residues 130-149 (DRLLAICQPLTYSTRMSQTV) are cytoplasmic. The helical transmembrane segment at 150-167 (QRMLVAASLACAFTNALT) threads the bilayer. The Extracellular segment spans residues 168–205 (HTVAMSTLNFCGPNEVNHFYCDLPQLFQLSCSSTQLNE). Residues 206–229 (LLLFAVGFIMAGTPLVLIITAYSH) form a helical membrane-spanning segment. The Cytoplasmic portion of the chain corresponds to 230 to 246 (VAAAVLRIRSVEGRKKA). A helical transmembrane segment spans residues 247–270 (FSTCGSHLTVVCLFFGRGIFNYMR). Topologically, residues 271–281 (LGSEEASDKDK) are extracellular. Residues 282–301 (GVGVFNTVINPMLNPLIYSL) traverse the membrane as a helical segment. The Cytoplasmic portion of the chain corresponds to 302–321 (RNPDVQGALWQIFLGRRSLT).

Belongs to the G-protein coupled receptor 1 family.

The protein resides in the cell membrane. Functionally, odorant receptor. The sequence is that of Olfactory receptor 3A2 (OR3A2) from Homo sapiens (Human).